The sequence spans 339 residues: MPDPRFFDSLGPALLSELAQAGAATLADAALGERVITHAAPLDASDAQAITFFSDAKRKDAAASTRAGACFVRPEHQGFLPPTCAALVTGRPQAAWAAAANRLHAPRRHEAGAPSLHPDAALEDGVALAPNVTIGQGASIGRGTRIGPGVVIGPGVVIGRYCRIGANAVIGFAMLGDNVAISAGAVIGEAGFGAALGPRGMVDLPQLGRVVIQDNVTLGANSCVDRGAFGDTTIGENTKIDNLVHVAHNVRIGRNCVLAAYTGVSGSTVVGDGVAFGGKAGVADHLNIGSGASIGAAASVFKDVPDGETWTGFPARPLKRWLRETAWLSRMAGGRGTRG.

Catalysis depends on H248, which acts as the Proton acceptor.

It belongs to the transferase hexapeptide repeat family. LpxD subfamily. As to quaternary structure, homotrimer.

It catalyses the reaction a UDP-3-O-[(3R)-3-hydroxyacyl]-alpha-D-glucosamine + a (3R)-hydroxyacyl-[ACP] = a UDP-2-N,3-O-bis[(3R)-3-hydroxyacyl]-alpha-D-glucosamine + holo-[ACP] + H(+). It participates in bacterial outer membrane biogenesis; LPS lipid A biosynthesis. In terms of biological role, catalyzes the N-acylation of UDP-3-O-acylglucosamine using 3-hydroxyacyl-ACP as the acyl donor. Is involved in the biosynthesis of lipid A, a phosphorylated glycolipid that anchors the lipopolysaccharide to the outer membrane of the cell. This is UDP-3-O-acylglucosamine N-acyltransferase from Caulobacter vibrioides (strain NA1000 / CB15N) (Caulobacter crescentus).